The sequence spans 1185 residues: Pyruvate carboxylase (1185 aa).

The region spanning 32 to 484 is the Biotin carboxylation domain; the sequence is KFTKVLVANR…WTTFIDDTPE (453 aa). ATP is bound by residues K150, E234, and H269. The ATP-grasp domain maps to 154–351; it reads RAIAIRCGVP…IVSAQLHVAA (198 aa). The active site involves R326. The 269-residue stretch at 570 to 838 folds into the Pyruvate carboxyltransferase domain; it reads GLIMDTTWRD…QLEFDNNQLR (269 aa). Substrate is bound by residues 578-582 and R651; that span reads RDAHQ. D579 serves as a coordination point for a divalent metal cation. 3 residues coordinate a divalent metal cation: K747, H777, and H779. K747 bears the N6-carboxylysine mark. T912 is a substrate binding site. In terms of domain architecture, Biotinyl-binding spans 1108–1183; the sequence is RADPGNPGHV…NGGDLCAVLE (76 aa). K1149 carries the N6-biotinyllysine modification.

Biotin serves as cofactor. Requires Zn(2+) as cofactor.

It is found in the cytoplasm. The enzyme catalyses hydrogencarbonate + pyruvate + ATP = oxaloacetate + ADP + phosphate + H(+). Its pathway is carbohydrate biosynthesis; gluconeogenesis. Functionally, pyruvate carboxylase catalyzes a 2-step reaction, involving the ATP-dependent carboxylation of the covalently attached biotin in the first step and the transfer of the carboxyl group to pyruvate in the second. This Schizosaccharomyces pombe (strain 972 / ATCC 24843) (Fission yeast) protein is Pyruvate carboxylase (pyr1).